Consider the following 514-residue polypeptide: Cobyric acid synthase (514 aa).

The 195-residue stretch at 263–457 (ALDVAVIRLP…LHGIFDNDPL (195 aa)) folds into the GATase cobBQ-type domain. The active-site Nucleophile is the Cys-344. His-449 is an active-site residue.

Belongs to the CobB/CobQ family. CobQ subfamily.

The protein operates within cofactor biosynthesis; adenosylcobalamin biosynthesis. Functionally, catalyzes amidations at positions B, D, E, and G on adenosylcobyrinic A,C-diamide. NH(2) groups are provided by glutamine, and one molecule of ATP is hydrogenolyzed for each amidation. The chain is Cobyric acid synthase from Desulfitobacterium hafniense (strain DSM 10664 / DCB-2).